Reading from the N-terminus, the 244-residue chain is NAD(P)H-quinone oxidoreductase subunit K (244 aa).

[4Fe-4S] cluster-binding residues include cysteine 51, cysteine 52, cysteine 116, and cysteine 147.

It belongs to the complex I 20 kDa subunit family. In terms of assembly, NDH-1 can be composed of about 15 different subunits; different subcomplexes with different compositions have been identified which probably have different functions. [4Fe-4S] cluster serves as cofactor.

Its subcellular location is the cellular thylakoid membrane. The catalysed reaction is a plastoquinone + NADH + (n+1) H(+)(in) = a plastoquinol + NAD(+) + n H(+)(out). It catalyses the reaction a plastoquinone + NADPH + (n+1) H(+)(in) = a plastoquinol + NADP(+) + n H(+)(out). Functionally, NDH-1 shuttles electrons from an unknown electron donor, via FMN and iron-sulfur (Fe-S) centers, to quinones in the respiratory and/or the photosynthetic chain. The immediate electron acceptor for the enzyme in this species is believed to be plastoquinone. Couples the redox reaction to proton translocation, and thus conserves the redox energy in a proton gradient. Cyanobacterial NDH-1 also plays a role in inorganic carbon-concentration. This chain is NAD(P)H-quinone oxidoreductase subunit K, found in Synechococcus sp. (strain JA-3-3Ab) (Cyanobacteria bacterium Yellowstone A-Prime).